The sequence spans 243 residues: Pyridoxine 5'-phosphate synthase (243 aa).

A 3-amino-2-oxopropyl phosphate-binding site is contributed by asparagine 6. 8–9 (DH) is a 1-deoxy-D-xylulose 5-phosphate binding site. Arginine 17 provides a ligand contact to 3-amino-2-oxopropyl phosphate. The active-site Proton acceptor is the histidine 42. Arginine 44 and histidine 49 together coordinate 1-deoxy-D-xylulose 5-phosphate. Glutamate 72 functions as the Proton acceptor in the catalytic mechanism. A 1-deoxy-D-xylulose 5-phosphate-binding site is contributed by threonine 102. Histidine 192 (proton donor) is an active-site residue. Residues glycine 193 and 214–215 (GH) contribute to the 3-amino-2-oxopropyl phosphate site.

It belongs to the PNP synthase family. Homooctamer; tetramer of dimers.

Its subcellular location is the cytoplasm. The enzyme catalyses 3-amino-2-oxopropyl phosphate + 1-deoxy-D-xylulose 5-phosphate = pyridoxine 5'-phosphate + phosphate + 2 H2O + H(+). It functions in the pathway cofactor biosynthesis; pyridoxine 5'-phosphate biosynthesis; pyridoxine 5'-phosphate from D-erythrose 4-phosphate: step 5/5. Functionally, catalyzes the complicated ring closure reaction between the two acyclic compounds 1-deoxy-D-xylulose-5-phosphate (DXP) and 3-amino-2-oxopropyl phosphate (1-amino-acetone-3-phosphate or AAP) to form pyridoxine 5'-phosphate (PNP) and inorganic phosphate. The sequence is that of Pyridoxine 5'-phosphate synthase from Sulfurihydrogenibium sp. (strain YO3AOP1).